The following is a 28-amino-acid chain: Sarcolamban A (28 aa).

Residues 7 to 27 traverse the membrane as a helical segment; it reads LFTTFGILAILLFFLYLIYAV.

Interacts with SERCA. In terms of tissue distribution, strongly expressed in embryonic and larval somatic muscles and postembryonic heart.

The protein resides in the sarcoplasmic reticulum membrane. The protein localises to the cell membrane. It localises to the sarcolemma. Its subcellular location is the T-tubule. In terms of biological role, plays an essential role in the regulation of calcium transport at the sarcoplasmic reticulum (SR), which is secondarily required for regular muscle contraction. This chain is Sarcolamban A, found in Drosophila melanogaster (Fruit fly).